The sequence spans 499 residues: Glycerol kinase (499 aa).

Threonine 13 contacts ADP. Residues threonine 13, threonine 14, and serine 15 each contribute to the ATP site. Residue threonine 13 participates in sn-glycerol 3-phosphate binding. Arginine 17 serves as a coordination point for ADP. Sn-glycerol 3-phosphate contacts are provided by arginine 83, glutamate 84, tyrosine 135, and aspartate 245. Glycerol contacts are provided by arginine 83, glutamate 84, tyrosine 135, aspartate 245, and glutamine 246. The ADP site is built by threonine 267 and glycine 310. ATP contacts are provided by threonine 267, glycine 310, glutamine 314, and alanine 411. ADP contacts are provided by alanine 411 and asparagine 415.

The protein belongs to the FGGY kinase family.

It catalyses the reaction glycerol + ATP = sn-glycerol 3-phosphate + ADP + H(+). The protein operates within polyol metabolism; glycerol degradation via glycerol kinase pathway; sn-glycerol 3-phosphate from glycerol: step 1/1. With respect to regulation, inhibited by fructose 1,6-bisphosphate (FBP). In terms of biological role, key enzyme in the regulation of glycerol uptake and metabolism. Catalyzes the phosphorylation of glycerol to yield sn-glycerol 3-phosphate. The polypeptide is Glycerol kinase (Xylella fastidiosa (strain M23)).